The primary structure comprises 303 residues: L(+)-tartrate dehydratase subunit alpha (303 aa).

Iron-sulfur cluster-binding residues include Cys-71, Cys-190, and Cys-277.

It belongs to the class-I fumarase family. Tetramer of two alpha and two beta subunits. Iron-sulfur cluster is required as a cofactor.

The catalysed reaction is (2R,3R)-tartrate = oxaloacetate + H2O. This is L(+)-tartrate dehydratase subunit alpha (ttdA) from Escherichia coli O6:K15:H31 (strain 536 / UPEC).